We begin with the raw amino-acid sequence, 103 residues long: Large ribosomal subunit protein bL21 (103 aa).

It belongs to the bacterial ribosomal protein bL21 family. In terms of assembly, part of the 50S ribosomal subunit. Contacts protein L20.

Its function is as follows. This protein binds to 23S rRNA in the presence of protein L20. This is Large ribosomal subunit protein bL21 from Aliivibrio fischeri (strain ATCC 700601 / ES114) (Vibrio fischeri).